An 894-amino-acid polypeptide reads, in one-letter code: Protein SEY1 (894 aa).

The tract at residues 1–64 (MGLDVDSVPI…PRALEPAQVT (64 aa)) is disordered. Residues 1-768 (MGLDVDSVPI…KRGTVSSMSQ (768 aa)) lie on the Cytoplasmic side of the membrane. The span at 9-24 (PIAEAAAPSSMAATEP) shows a compositional bias: low complexity. Over residues 40 to 53 (APMNTDSSRETMPT) the composition is skewed to polar residues. Residues 137–359 (GFGYDICAVL…DESYVFKTEY (223 aa)) enclose the GB1/RHD3-type G domain. 147 to 154 (GSQSTGKS) is a GTP binding site. Residues 536 to 559 (KVDDERAQLLDELHTLARTLRANE) are a coiled coil. A helical membrane pass occupies residues 769–789 (VPIWMYGVLVVLGWNEAMAVL). Topologically, residues 790–792 (RNP) are lumenal. A helical membrane pass occupies residues 793–813 (VYFTLLCMVLATAYVIWRLNL). Over 814–894 (GTPVLALASG…DSHPRLPASF (81 aa)) the chain is Cytoplasmic. Positions 841 to 894 (DGTPPSANRAREYRVPSGSTAHVSEKTPHRPLTTSGAAEADTVEDSHPRLPASF) are disordered.

It belongs to the TRAFAC class dynamin-like GTPase superfamily. GB1/RHD3 GTPase family. RHD3 subfamily.

The protein localises to the endoplasmic reticulum membrane. In terms of biological role, cooperates with the reticulon proteins and tubule-shaping DP1 family proteins to generate and maintain the structure of the tubular endoplasmic reticulum network. Has GTPase activity, which is required for its function in ER organization. This chain is Protein SEY1, found in Malassezia globosa (strain ATCC MYA-4612 / CBS 7966) (Dandruff-associated fungus).